The sequence spans 790 residues: RNA-directed RNA polymerase 2a (790 aa).

The RdRp catalytic domain occupies 524 to 639; the sequence is FHFKEIDFSK…GTVEELPRDQ (116 aa). The interval 771–790 is disordered; that stretch reads IKPRRVKKSHSDARSRARRA. The span at 779-790 shows a compositional bias: basic and acidic residues; sequence SHSDARSRARRA.

The protein belongs to the bromoviridae 2a family. As to quaternary structure, interacts with replication protein 1a.

The enzyme catalyses RNA(n) + a ribonucleoside 5'-triphosphate = RNA(n+1) + diphosphate. Functionally, RNA-dependent RNA polymerase which replicates the viral genome composed of 3 RNA segments, RNA1, RNA2 and RNA3. The chain is RNA-directed RNA polymerase 2a from Alfalfa mosaic virus (AMV).